The primary structure comprises 228 residues: Urease accessory protein UreG (228 aa).

GTP is bound at residue 34 to 41 (GPVGSGKT).

It belongs to the SIMIBI class G3E GTPase family. UreG subfamily. In terms of assembly, homodimer. UreD, UreF and UreG form a complex that acts as a GTP-hydrolysis-dependent molecular chaperone, activating the urease apoprotein by helping to assemble the nickel containing metallocenter of UreC. The UreE protein probably delivers the nickel.

Its subcellular location is the cytoplasm. Functionally, facilitates the functional incorporation of the urease nickel metallocenter. This process requires GTP hydrolysis, probably effectuated by UreG. In Rhodococcus opacus (strain B4), this protein is Urease accessory protein UreG.